Reading from the N-terminus, the 286-residue chain is Zinc finger protein ZAT5 (286 aa).

Disordered regions lie at residues 1–28, 40–60, and 131–171; these read MMMGQDEVGSDQTQIIKGKRTKRQRSSS, STSSSAGGSGGERAVSDEYNS, and GGHR…FKVS. The C2H2-type 1 zinc-finger motif lies at 115–137; the sequence is YECKTCNRTFSSFQALGGHRASH. Residues 154–171 show a composition bias toward polar residues; sequence QPKSSASEEGQNSHFKVS. Residues 190–212 form a C2H2-type 2 zinc finger; sequence HECSICGSEFTSGQALGGHMRRH.

Expressed in flowers and siliques.

The protein resides in the nucleus. Probable transcription factor that may be involved in stress responses. This chain is Zinc finger protein ZAT5 (ZAT5), found in Arabidopsis thaliana (Mouse-ear cress).